The following is a 133-amino-acid chain: Fluoride-specific ion channel FluC (133 aa).

The next 4 membrane-spanning stretches (helical) occupy residues 5 to 25 (VPAT…LGAL), 43 to 63 (VATL…YVVI), 76 to 96 (VIMI…IESL), and 108 to 128 (ISYV…AIVL). 2 residues coordinate Na(+): G83 and T86.

This sequence belongs to the fluoride channel Fluc/FEX (TC 1.A.43) family.

The protein localises to the cell inner membrane. It carries out the reaction fluoride(in) = fluoride(out). Its activity is regulated as follows. Na(+) is not transported, but it plays an essential structural role and its presence is essential for fluoride channel function. Fluoride-specific ion channel. Important for reducing fluoride concentration in the cell, thus reducing its toxicity. This Saccharophagus degradans (strain 2-40 / ATCC 43961 / DSM 17024) protein is Fluoride-specific ion channel FluC.